The following is a 2280-amino-acid chain: Protein Ycf2 (2280 aa).

1631 to 1638 contributes to the ATP binding site; that stretch reads GSIGTGRS.

It belongs to the Ycf2 family.

The protein localises to the plastid. Its subcellular location is the chloroplast stroma. Functionally, probable ATPase of unknown function. Its presence in a non-photosynthetic plant (Epifagus virginiana) and experiments in tobacco indicate that it has an essential function which is probably not related to photosynthesis. The chain is Protein Ycf2 from Nicotiana tomentosiformis (Tobacco).